A 156-amino-acid chain; its full sequence is Ribosome maturation factor RimP (156 aa).

Belongs to the RimP family.

It is found in the cytoplasm. Required for maturation of 30S ribosomal subunits. This Bacillus cereus (strain G9842) protein is Ribosome maturation factor RimP.